The sequence spans 465 residues: uncharacterized protein (465 aa).

An RAMA domain is found at 6 to 91; sequence NVTLSNLIDF…LKLKREYLFR (86 aa). Disordered stretches follow at residues 95–377 and 392–465; these read TGKN…SNNQ and YNQQ…KSKS. Low complexity predominate over residues 117-137; sequence PQQQQQQQQQQQQQQQQQQQP. The span at 156-169 shows a compositional bias: acidic residues; sequence ETSDQDIDNDDDDA. The span at 177 to 190 shows a compositional bias: low complexity; that stretch reads TTTTTTTTTTTTTT. Over residues 208-220 the composition is skewed to basic and acidic residues; the sequence is PKEKKKEKKENIL. A coiled-coil region spans residues 214 to 242; that stretch reads EKKENILTKKKQQSLQYQQQLQLLQRQNS. Positions 226–263 are enriched in low complexity; that stretch reads QSLQYQQQLQLLQRQNSPPSVSPSSSTSTSSSTSSPAS. A compositionally biased stretch (polar residues) spans 264–294; the sequence is NQIFNSFGPNSQNHNQYGINYNSQQHQPQQY. Low complexity predominate over residues 295–376; it reads NNNNNNNNNN…NNNINNNSNN (82 aa). The segment covering 392–407 has biased composition (polar residues); the sequence is YNQQNPPKHQYPNNFL. Low complexity predominate over residues 424-442; it reads NQSQNQNQNQNQNQNQNQK. A compositionally biased stretch (basic residues) spans 443–465; the sequence is SKSKSKSKSKFKSKSKSKSKSKS.

This is an uncharacterized protein from Dictyostelium discoideum (Social amoeba).